The chain runs to 249 residues: MLNSLIADFRIIFERDPAARNWLEVLFCYPGLQALLIHRFSHRLYTLGLPFFPRLMSHLARFFTGIEIHPGAQIGQGVFIDHGMGVVIGETAIVGDYSLIYQGVTLGGTGKESGKRHPTLGENVVVGAGAKVLGNIAIGDNVRIGAGSVVLRDVPADFTVVGVPGRMVHPSGERVNPLEHGKLPDSEGKVIRLLLERIELLEQQVATLQQQQSEQAWESDYRSCSETDREPVLCRLGDREIEEFLGGTL.

This sequence belongs to the transferase hexapeptide repeat family.

The protein resides in the cytoplasm. It catalyses the reaction L-serine + acetyl-CoA = O-acetyl-L-serine + CoA. Its pathway is amino-acid biosynthesis; L-cysteine biosynthesis; L-cysteine from L-serine: step 1/2. This is Serine acetyltransferase (cysE) from Synechocystis sp. (strain ATCC 27184 / PCC 6803 / Kazusa).